The primary structure comprises 36 residues: Pancreatic polypeptide (36 aa).

Tyr-36 bears the Tyrosine amide mark.

It belongs to the NPY family.

The protein resides in the secreted. Its function is as follows. Hormone secreted by pancreatic cells that acts as a regulator of pancreatic and gastrointestinal functions probably by signaling through the G protein-coupled receptor NPY4R2. This Didelphis virginiana (North American opossum) protein is Pancreatic polypeptide (PPY).